The chain runs to 64 residues: Large ribosomal subunit protein bL28 (64 aa).

It belongs to the bacterial ribosomal protein bL28 family.

This is Large ribosomal subunit protein bL28 from Trichlorobacter lovleyi (strain ATCC BAA-1151 / DSM 17278 / SZ) (Geobacter lovleyi).